We begin with the raw amino-acid sequence, 144 residues long: Transcription antitermination protein NusB (144 aa).

Belongs to the NusB family.

Involved in transcription antitermination. Required for transcription of ribosomal RNA (rRNA) genes. Binds specifically to the boxA antiterminator sequence of the ribosomal RNA (rrn) operons. This is Transcription antitermination protein NusB from Blochmanniella pennsylvanica (strain BPEN).